The chain runs to 147 residues: 3-dehydroquinate dehydratase (147 aa).

Y22 serves as the catalytic Proton acceptor. Substrate-binding residues include N74, H80, and D87. The active-site Proton donor is the H101. Residues 102-103 and R112 contribute to the substrate site; that span reads IS.

The protein belongs to the type-II 3-dehydroquinase family. In terms of assembly, homododecamer.

It carries out the reaction 3-dehydroquinate = 3-dehydroshikimate + H2O. The protein operates within metabolic intermediate biosynthesis; chorismate biosynthesis; chorismate from D-erythrose 4-phosphate and phosphoenolpyruvate: step 3/7. Catalyzes a trans-dehydration via an enolate intermediate. The protein is 3-dehydroquinate dehydratase of Lachnospira eligens (strain ATCC 27750 / DSM 3376 / VPI C15-48 / C15-B4) (Eubacterium eligens).